The chain runs to 212 residues: MNRTFIITGTDTGIGKTVFSAALAGALNAYYWKPVQSGLEEATDSETVVQLAGLSRRNVIPESWRLNTPASPHLSAQIDRVEIDTDALAVPSVDAPLVIEGAGGLHVPLTRRTTFIDVFARWRKPVILCARTGLGTINHTLLSLEALNRRNIPVLGIAFVGDHQPDTEKIIPELSGVRRLGRLPRLAKLDPDALRQAFREHFDINIFGGASE.

Position 13–18 (glycine 13–valine 18) interacts with ATP. Residue threonine 17 coordinates Mg(2+). The active site involves lysine 33. Serine 37 is a binding site for substrate. Position 100 (glutamate 100) interacts with Mg(2+). ATP-binding positions include glutamate 100–glycine 103 and proline 184–leucine 186.

Belongs to the dethiobiotin synthetase family. In terms of assembly, homodimer. The cofactor is Mg(2+).

The protein localises to the cytoplasm. It catalyses the reaction (7R,8S)-7,8-diammoniononanoate + CO2 + ATP = (4R,5S)-dethiobiotin + ADP + phosphate + 3 H(+). Its pathway is cofactor biosynthesis; biotin biosynthesis; biotin from 7,8-diaminononanoate: step 1/2. Functionally, catalyzes a mechanistically unusual reaction, the ATP-dependent insertion of CO2 between the N7 and N8 nitrogen atoms of 7,8-diaminopelargonic acid (DAPA, also called 7,8-diammoniononanoate) to form a ureido ring. This chain is ATP-dependent dethiobiotin synthetase BioD, found in Brucella anthropi (strain ATCC 49188 / DSM 6882 / CCUG 24695 / JCM 21032 / LMG 3331 / NBRC 15819 / NCTC 12168 / Alc 37) (Ochrobactrum anthropi).